Here is a 185-residue protein sequence, read N- to C-terminus: Ribosome-recycling factor (185 aa).

Belongs to the RRF family.

It localises to the cytoplasm. Its function is as follows. Responsible for the release of ribosomes from messenger RNA at the termination of protein biosynthesis. May increase the efficiency of translation by recycling ribosomes from one round of translation to another. The sequence is that of Ribosome-recycling factor from Desulforapulum autotrophicum (strain ATCC 43914 / DSM 3382 / VKM B-1955 / HRM2) (Desulfobacterium autotrophicum).